The following is a 443-amino-acid chain: Oxygen-dependent coproporphyrinogen-III oxidase, mitochondrial (443 aa).

A mitochondrion-targeting transit peptide spans 1 to 98 (MALRLGRLGS…EMVPKSSGAR (98 aa)). The tract at residues 89 to 112 (EMVPKSSGARSPSPGRREEDGDEL) is disordered. The residue at position 101 (Ser-101) is a Phosphoserine. Residues 103–112 (GRREEDGDEL) are compositionally biased toward basic and acidic residues. An important for dimerization region spans residues 182–191 (VLQDGRVFEK). Ser-233 is a binding site for coproporphyrinogen III. His-247 acts as the Proton donor in catalysis. 249-251 (NYR) serves as a coordination point for coproporphyrinogen III. The important for dimerization stretch occupies residues 381 to 417 (YVEFNLLYDRGTKFGLFTPGSRIESILMSLPLTARWE). The residue at position 393 (Lys-393) is an N6-acetyllysine; alternate. An N6-succinyllysine; alternate modification is found at Lys-393. 400–402 (GSR) is a coproporphyrinogen III binding site.

Belongs to the aerobic coproporphyrinogen-III oxidase family. In terms of assembly, homodimer. Expressed in erythroid cells. Expressed in liver.

It is found in the mitochondrion intermembrane space. It carries out the reaction coproporphyrinogen III + O2 + 2 H(+) = protoporphyrinogen IX + 2 CO2 + 2 H2O. It participates in porphyrin-containing compound metabolism; protoporphyrin-IX biosynthesis; protoporphyrinogen-IX from coproporphyrinogen-III (O2 route): step 1/1. Involved in the heme biosynthesis. Catalyzes the aerobic oxidative decarboxylation of propionate groups of rings A and B of coproporphyrinogen-III to yield the vinyl groups in protoporphyrinogen-IX. The polypeptide is Oxygen-dependent coproporphyrinogen-III oxidase, mitochondrial (Cpox) (Mus musculus (Mouse)).